Here is a 104-residue protein sequence, read N- to C-terminus: Iron-sulfur cluster assembly protein CyaY (104 aa).

It belongs to the frataxin family.

Involved in iron-sulfur (Fe-S) cluster assembly. May act as a regulator of Fe-S biogenesis. The polypeptide is Iron-sulfur cluster assembly protein CyaY (Vibrio campbellii (strain ATCC BAA-1116)).